Here is a 375-residue protein sequence, read N- to C-terminus: Probable G-protein coupled receptor 34 (375 aa).

Topologically, residues 1 to 54 (MTTTSVDSWLCSSHGMHFITNYSDQASQNFSGVPNVTSCPMDEKLLSTVLTTFY) are extracellular. 3 N-linked (GlcNAc...) asparagine glycosylation sites follow: Asn21, Asn29, and Asn35. Residues 55-75 (SVIFLVGLVGNIIALYVFLGI) traverse the membrane as a helical segment. Residues 76–81 (HRKRNS) lie on the Cytoplasmic side of the membrane. The chain crosses the membrane as a helical span at residues 82–102 (IQIYLLNVAVADLLLIFCLPF). Residues 103-121 (RIMYHINQNKWTLGVILCK) lie on the Extracellular side of the membrane. Cys120 and Cys197 form a disulfide bridge. The chain crosses the membrane as a helical span at residues 122–142 (VVGTLFYMNMYISIILLGFIS). Residues 143–164 (LDRYIKINRSIQQRRAITTKQS) lie on the Cytoplasmic side of the membrane. Residues 165-185 (IYVCCIVWTVALAGFLTMIIL) traverse the membrane as a helical segment. Residues 186–209 (TLKKGGHNSTMCFHYRDRHNAKGE) lie on the Extracellular side of the membrane. N-linked (GlcNAc...) asparagine glycosylation is present at Asn193. The helical transmembrane segment at 210-230 (AIFNFVLVVMFWLIFLLIILS) threads the bilayer. Residues 231–262 (YIKIGKNLLRISKRRSKFPNSGKYATTARNSF) are Cytoplasmic-facing. The chain crosses the membrane as a helical span at residues 263-283 (IVLIIFTICFVPYHAFRFIYI). Topologically, residues 284 to 303 (SSQLNVSSCYWKEIIHKTNE) are extracellular. N-linked (GlcNAc...) asparagine glycosylation occurs at Asn288. The helical transmembrane segment at 304 to 324 (IMLVFSSFNSCLDPVMYFLMS) threads the bilayer. The Cytoplasmic segment spans residues 325-375 (SNIRKIMCQLLFRRFQSEASRSESTSEFKPGHSLHDLSVTVKMPQYSTKGN).

It belongs to the G-protein coupled receptor 1 family. In terms of tissue distribution, highly expressed in glial cells such as astrocytes and microglia.

It localises to the cell membrane. Functionally, G-protein-coupled receptor of lysophosphatidylserine (LysoPS) that plays different roles in immune response. Acts a damage-sensing receptor that triggers tissue repair upon recognition of dying neutrophils. Mechanistically, apoptotic neutrophils release lysophosphatydilserine that are recognized by type 3 innate lymphoid cells (ILC3s) via GPR34, which activates downstream PI3K-AKT and RAS-ERK signaling pathways leading to STAT3 activation and IL-22 production. Plays an important role in microglial function, controlling morphology and phagocytosis. In Mus musculus (Mouse), this protein is Probable G-protein coupled receptor 34 (Gpr34).